A 348-amino-acid polypeptide reads, in one-letter code: Phenylalanine--tRNA ligase alpha subunit (348 aa).

E262 is a binding site for Mg(2+).

This sequence belongs to the class-II aminoacyl-tRNA synthetase family. Phe-tRNA synthetase alpha subunit type 1 subfamily. As to quaternary structure, tetramer of two alpha and two beta subunits. Mg(2+) is required as a cofactor.

The protein resides in the cytoplasm. The enzyme catalyses tRNA(Phe) + L-phenylalanine + ATP = L-phenylalanyl-tRNA(Phe) + AMP + diphosphate + H(+). The polypeptide is Phenylalanine--tRNA ligase alpha subunit (Streptococcus pneumoniae serotype 2 (strain D39 / NCTC 7466)).